We begin with the raw amino-acid sequence, 149 residues long: UPF0178 protein lwe1471 (149 aa).

The protein belongs to the UPF0178 family.

This is UPF0178 protein lwe1471 from Listeria welshimeri serovar 6b (strain ATCC 35897 / DSM 20650 / CCUG 15529 / CIP 8149 / NCTC 11857 / SLCC 5334 / V8).